Reading from the N-terminus, the 461-residue chain is Chromosomal replication initiator protein DnaA (461 aa).

Residues 1–90 (MAVSLWQQCI…RPSARPVAPA (90 aa)) are domain I, interacts with DnaA modulators. Positions 91-124 (PVAAKPVNRQTKAQVGTTSFNTQAEPIINPNHRS) are domain II. Residues 125–341 (NINPTYQFDN…GALNRVIANA (217 aa)) form a domain III, AAA+ region region. ATP-binding residues include Gly-169, Gly-171, Lys-172, and Thr-173. The domain IV, binds dsDNA stretch occupies residues 342–461 (NFTGRPITID…YANLIRTLSS (120 aa)).

Belongs to the DnaA family. As to quaternary structure, oligomerizes as a right-handed, spiral filament on DNA at oriC.

The protein localises to the cytoplasm. In terms of biological role, plays an essential role in the initiation and regulation of chromosomal replication. ATP-DnaA binds to the origin of replication (oriC) to initiate formation of the DNA replication initiation complex once per cell cycle. Binds the DnaA box (a 9 base pair repeat at the origin) and separates the double-stranded (ds)DNA. Forms a right-handed helical filament on oriC DNA; dsDNA binds to the exterior of the filament while single-stranded (ss)DNA is stabiized in the filament's interior. The ATP-DnaA-oriC complex binds and stabilizes one strand of the AT-rich DNA unwinding element (DUE), permitting loading of DNA polymerase. After initiation quickly degrades to an ADP-DnaA complex that is not apt for DNA replication. Binds acidic phospholipids. This chain is Chromosomal replication initiator protein DnaA, found in Shewanella frigidimarina (strain NCIMB 400).